A 513-amino-acid polypeptide reads, in one-letter code: GMP synthase [glutamine-hydrolyzing] (513 aa).

In terms of domain architecture, Glutamine amidotransferase type-1 spans 5–195; the sequence is LVLVIDFGGQ…VYNICGCTGD (191 aa). The Nucleophile role is filled by C82. Active-site residues include H169 and E171. The GMPS ATP-PPase domain occupies 196–388; that stretch reads WKMDSFVEKT…LGIPEKLVFR (193 aa). Residue 223–229 participates in ATP binding; it reads SGGVDSS.

As to quaternary structure, homodimer.

The catalysed reaction is XMP + L-glutamine + ATP + H2O = GMP + L-glutamate + AMP + diphosphate + 2 H(+). It participates in purine metabolism; GMP biosynthesis; GMP from XMP (L-Gln route): step 1/1. In terms of biological role, catalyzes the synthesis of GMP from XMP. The protein is GMP synthase [glutamine-hydrolyzing] of Clostridium botulinum (strain Alaska E43 / Type E3).